A 346-amino-acid polypeptide reads, in one-letter code: Tyrosine--tRNA ligase (346 aa).

L-tyrosine is bound at residue tyrosine 35. The 'HIGH' region motif lies at 40–48 (PTGEMHIGH). The L-tyrosine site is built by tyrosine 162, glutamine 166, aspartate 169, and glutamine 184.

The protein belongs to the class-I aminoacyl-tRNA synthetase family. TyrS type 3 subfamily. As to quaternary structure, homodimer.

Its subcellular location is the cytoplasm. The catalysed reaction is tRNA(Tyr) + L-tyrosine + ATP = L-tyrosyl-tRNA(Tyr) + AMP + diphosphate + H(+). Catalyzes the attachment of tyrosine to tRNA(Tyr) in a two-step reaction: tyrosine is first activated by ATP to form Tyr-AMP and then transferred to the acceptor end of tRNA(Tyr). The sequence is that of Tyrosine--tRNA ligase from Haloarcula marismortui (strain ATCC 43049 / DSM 3752 / JCM 8966 / VKM B-1809) (Halobacterium marismortui).